An 881-amino-acid chain; its full sequence is Glutamate--tRNA ligase (881 aa).

Residues 1 to 480 form a glutamyl-tRNA synthetase region; the sequence is MSVRVRLAPS…ILRFKKSIGQ (480 aa). The short motif at 9–19 is the 'HIGH' region element; sequence PSPTGNLHIGT. The short motif at 248-252 is the 'KMSKS' region element; the sequence is KLSKR. K251 contributes to the ATP binding site. Positions 481-881 are unknown; it reads EIEDTKIEDT…IKREIFGKPS (401 aa). A compositionally biased stretch (basic and acidic residues) spans 488 to 502; sequence EDTKKAETTPHKSKG. Residues 488–747 form a disordered region; the sequence is EDTKKAETTP…PTATDAETRE (260 aa). A compositionally biased stretch (low complexity) spans 522–548; sequence QTQTTKPPKKGQTATPVATTPTATDVT. Over residues 549-562 the composition is skewed to polar residues; the sequence is ENTSVGTQETQSQI. A compositionally biased stretch (low complexity) spans 563-576; the sequence is TTPVATTPTATDVT. Residues 577–590 show a composition bias toward polar residues; sequence ENTSVGTQETQSQI. The span at 591–604 shows a compositional bias: low complexity; that stretch reads TTPVATTPTATDVT. Residues 605-618 show a composition bias toward polar residues; the sequence is ENTSVETQETQSQI. Over residues 619–632 the composition is skewed to low complexity; sequence TTPVATTPTATDVT. Residues 633–646 show a composition bias toward polar residues; that stretch reads ENTSVETQETQSQI. Over residues 647 to 660 the composition is skewed to low complexity; it reads TTPVATTPTATDVT. Over residues 661-674 the composition is skewed to polar residues; it reads ENTSVGTQETQSQI. A compositionally biased stretch (low complexity) spans 675–688; that stretch reads TTPVATTPTATDVT. Residues 689 to 702 show a composition bias toward polar residues; the sequence is ENTSVETQETQSQI. The span at 703-720 shows a compositional bias: low complexity; that stretch reads TTPVATTSTATDVTENTS. Residues 721–730 show a composition bias toward polar residues; it reads VETQETQSQI. Low complexity predominate over residues 731–742; sequence TTPVATTPTATD. The next 2 helical transmembrane spans lie at 809–829 and 832–852; these read LFGW…VIEA and GIPI…VWFV.

Belongs to the class-I aminoacyl-tRNA synthetase family. Glutamate--tRNA ligase type 1 subfamily. As to quaternary structure, monomer.

The protein localises to the cytoplasm. It is found in the cell membrane. It carries out the reaction tRNA(Glu) + L-glutamate + ATP = L-glutamyl-tRNA(Glu) + AMP + diphosphate. Catalyzes the attachment of glutamate to tRNA(Glu) in a two-step reaction: glutamate is first activated by ATP to form Glu-AMP and then transferred to the acceptor end of tRNA(Glu). The polypeptide is Glutamate--tRNA ligase (gltX) (Trichodesmium erythraeum (strain IMS101)).